The following is a 162-amino-acid chain: Probable chemoreceptor glutamine deamidase CheD (162 aa).

The protein belongs to the CheD family.

The enzyme catalyses L-glutaminyl-[protein] + H2O = L-glutamyl-[protein] + NH4(+). In terms of biological role, probably deamidates glutamine residues to glutamate on methyl-accepting chemotaxis receptors (MCPs), playing an important role in chemotaxis. The sequence is that of Probable chemoreceptor glutamine deamidase CheD from Clostridium kluyveri (strain ATCC 8527 / DSM 555 / NBRC 12016 / NCIMB 10680 / K1).